The primary structure comprises 395 residues: Na(+)/H(+) antiporter NhaA (395 aa).

11 helical membrane-spanning segments follow: residues 11–31, 61–81, 96–116, 127–147, 156–176, 179–199, 215–237, 262–282, 295–315, 334–354, and 366–386; these read FQLE…ALII, LLLW…GLEV, IVLP…IYWF, GWAI…ALLG, LFLM…IAIF, GELS…LVAM, LILW…TLAF, VAYG…LSGV, IAVG…WLAV, VAIL…LAFV, and MGIL…TAAA.

This sequence belongs to the NhaA Na(+)/H(+) (TC 2.A.33) antiporter family.

Its subcellular location is the cell inner membrane. It catalyses the reaction Na(+)(in) + 2 H(+)(out) = Na(+)(out) + 2 H(+)(in). Functionally, na(+)/H(+) antiporter that extrudes sodium in exchange for external protons. This chain is Na(+)/H(+) antiporter NhaA, found in Pseudomonas fluorescens (strain Pf0-1).